The following is a 257-amino-acid chain: Pyridoxine/pyridoxamine 5'-phosphate oxidase (257 aa).

33–36 (RIKY) is a substrate binding site. An FMN-binding site is contributed by 90 to 93 (RFVL). Lysine 95 lines the pyridoxal 5'-phosphate pocket. Residues 105–106 (YT) and lysine 112 contribute to the FMN site. Residues tyrosine 152, arginine 156, and serine 160 each contribute to the pyridoxal 5'-phosphate site. Residues 169 to 170 (QS) and tryptophan 216 each bind FMN. 222 to 224 (RLH) is a substrate binding site. FMN is bound at residue arginine 226.

Belongs to the pyridoxamine 5'-phosphate oxidase family. In terms of assembly, homodimer. It depends on FMN as a cofactor. Expressed in silk gland and fat body of the larva.

It catalyses the reaction pyridoxamine 5'-phosphate + O2 + H2O = pyridoxal 5'-phosphate + H2O2 + NH4(+). The enzyme catalyses pyridoxine 5'-phosphate + O2 = pyridoxal 5'-phosphate + H2O2. The protein operates within cofactor metabolism; pyridoxal 5'-phosphate salvage; pyridoxal 5'-phosphate from pyridoxamine 5'-phosphate: step 1/1. It participates in cofactor metabolism; pyridoxal 5'-phosphate salvage; pyridoxal 5'-phosphate from pyridoxine 5'-phosphate: step 1/1. In terms of biological role, catalyzes the oxidation of either pyridoxine 5'-phosphate (PNP) or pyridoxamine 5'-phosphate (PMP) into pyridoxal 5'-phosphate (PLP). This is Pyridoxine/pyridoxamine 5'-phosphate oxidase from Bombyx mori (Silk moth).